The following is a 710-amino-acid chain: MKLVFLVLLFLGALGLCLAGRRRSVQWCAVSQPEATKCFQWQRNMRKVRGPPVSCIKRDSPIQCIQAIAENRADAVTLDGGFIYEAGLAPYKLRPVAAEVYGTERQPRTHYYAVAVVKKGGSFQLNELQGLKSCHTGLRRTAGWNVPIGTLRPFLNWTGPPEPIEAAVARFFSASCVPGADKGQFPNLCRLCAGTGENKCAFSSQEPYFSYSGAFKCLRDGAGDVAFIRESTVFEDLSDEAERDEYELLCPDNTRKPVDKFKDCHLARVPSHAVVARSVNGKEDAIWNLLRQAQEKFGKDKSPKFQLFGSPSGQKDLLFKDSAIGFSRVPPRIDSGLYLGSGYFTAIQNLRKSEEEVAARRARVVWCAVGEQELRKCNQWSGLSEGSVTCSSASTTEDCIALVLKGEADAMSLDGGYVYTAGKCGLVPVLAENYKSQQSSDPDPNCVDRPVEGYLAVAVVRRSDTSLTWNSVKGKKSCHTAVDRTAGWNIPMGLLFNQTGSCKFDEYFSQSCAPGSDPRSNLCALCIGDEQGENKCVPNSNERYYGYTGAFRCLAENAGDVAFVKDVTVLQNTDGNNNEAWAKDLKLADFALLCLDGKRKPVTEARSCHLAMAPNHAVVSRMDKVERLKQVLLHQQAKFGRNGSDCPDKFCLFQSETKNLLFNDNTECLARLHGKTTYEKYLGPQYVAGITNLKKCSTSPLLEACEFLRK.

Residues 1–19 (MKLVFLVLLFLGALGLCLA) form the signal peptide. Phe10 is modified (phosphoserine; alternate). A glycan (O-linked (GlcNAc) serine; alternate) is linked at Phe10. A critical for glycosaminoglycan, lipid A, lysozyme and DNA binding region spans residues 20 to 24 (GRRRS). Bactericidal and antifungal activity stretches follow at residues 20–29 (GRRRSVQWCA) and 39–49 (FQWQRNMRKVR). The segment at 21 to 22 (RR) is important for full bactericidal and antifungal activities. 2 consecutive Transferrin-like domains span residues 25–352 (VQWC…NLRK) and 364–695 (VVWC…NLKK). 2 disulfide bridges follow: Cys28–Cys64 and Cys38–Cys55. Interaction with PspA regions lie at residues 39–46 (FQWQRNMR) and 57–58 (KR). An interaction with lipopolysaccharide region spans residues 39 to 49 (FQWQRNMRKVR). The involved in glycosaminoglycan binding stretch occupies residues 46–51 (RKVRGP). Asp79 lines the Fe(3+) pocket. Residue Lys92 is part of the active site. Tyr111 provides a ligand contact to Fe(3+). 4 disulfides stabilise this stretch: Cys134–Cys217, Cys176–Cys192, Cys189–Cys200, and Cys250–Cys264. Thr136, Arg140, Ala142, and Gly143 together coordinate hydrogencarbonate. An N-linked (GlcNAc...) asparagine glycan is attached at Asn156. Residue Tyr211 participates in Fe(3+) binding. His272 is a Fe(3+) binding site. The active-site Nucleophile is Ser278. 2 cysteine pairs are disulfide-bonded: Cys367/Cys399 and Cys377/Cys390. Residues Gln379 and Ser391 each participate in a glycyl lysine isopeptide (Lys-Gly) (interchain with G-Cter in ubiquitin) cross-link. Residues Asp414 and Tyr454 each coordinate Fe(3+). 8 disulfides stabilise this stretch: Cys424/Cys705, Cys446/Cys668, Cys478/Cys553, Cys502/Cys696, Cys512/Cys526, Cys523/Cys536, Cys594/Cys608, and Cys646/Cys651. Residues Thr480, Arg484, Ala486, and Gly487 each contribute to the hydrogencarbonate site. Asn497 carries N-linked (GlcNAc...) asparagine glycosylation. A Fe(3+)-binding site is contributed by Tyr547. His616 contacts Fe(3+). Asn642 is a glycosylation site (N-linked (GlcNAc...) asparagine).

The protein belongs to the transferrin family. In terms of assembly, monomer. Found in a complex with LTF, CLU, EPPIN and SEMG1. Found in a complex with MPO and LTF; interacts directly with CP, allows Fe(3+) incorporation into LTF and activation of CP ferroxidase activity. Post-translationally, phosphorylation at Ser-10 activates the transcriptional activity. Phosphorylation at Ser-10 also promotes proteasomal degradation. Alternatively can undergo O-GlcNAcylation at Ser-10. In terms of processing, O-GlcNAcylation at Ser-10 inhibits DNA binding and negatively regulates the transcriptional activity. Alternatively can undergo phosphorylation at Ser-10. Poly-N-acetyllactosaminic carbohydrate moiety seems to be needed for TLR4 activation. As to expression, high levels are found in saliva and tears, intermediate levels in serum and plasma, and low levels in urine. In kidney, detected in the distal collecting tubules in the medulla but not in the cortical region or in blood vessels. Detected in peripheral blood neutrophils (at protein level). Isoform 1 and isoform DeltaLf are expressed in breast, prostate, spleen, pancreas, kidney, small intestine, lung, skeletal muscle, uterus, thymus and fetal liver. Isoform 1 is expressed in brain, testis and peripheral blood leukocytes; isoform DeltaLf is barely detectable in these tissues. Isoform DeltaLf is expressed in placenta, liver and ovary; isoform 1 is barely detectable in these tissues. In kidney, isoform 1 is expressed at high levels in the collecting tubules of the medulla but at very low levels in the cortex.

The protein localises to the secreted. Its subcellular location is the cytoplasmic granule. It localises to the cytoplasm. The protein resides in the nucleus. Its function is as follows. Transferrins are iron binding transport proteins which can bind two Fe(3+) ions in association with the binding of an anion, usually bicarbonate. Major iron-binding and multifunctional protein found in exocrine fluids such as breast milk and mucosal secretions. Has antimicrobial activity, which depends on the extracellular cation concentration. Antimicrobial properties include bacteriostasis, which is related to its ability to sequester free iron and thus inhibit microbial growth, as well as direct bactericidal properties leading to the release of lipopolysaccharides from the bacterial outer membrane. Can also prevent bacterial biofilm development in P.aeruginosa infection. Has weak antifungal activity against C.albicans. Has anabolic, differentiating and anti-apoptotic effects on osteoblasts and can also inhibit osteoclastogenesis, possibly playing a role in the regulation of bone growth. Promotes binding of species C adenoviruses to epithelial cells, promoting adenovirus infection. Can inhibit papillomavirus infections. Stimulates the TLR4 signaling pathway leading to NF-kappa-B activation and subsequent pro-inflammatory cytokine production while also interfering with the lipopolysaccharide (LPS)-stimulated TLR4 signaling. Inhibits neutrophil granulocyte migration to sites of apoptosis, when secreted by apoptotic cells. Stimulates VEGFA-mediated endothelial cell migration and proliferation. Binds heparin, chondroitin sulfate and possibly other glycosaminoglycans (GAGs). Also binds specifically to pneumococcal surface protein A (PspA), the lipid A portion of bacterial lipopolysaccharide (LPS), lysozyme and DNA. In terms of biological role, lactoferricin binds to the bacterial surface and is crucial for the bactericidal functions. Has some antiviral activity against papillomavirus infection. N-terminal region shows strong antifungal activity against C.albicans. Contains two BBXB heparin-binding consensus sequences that appear to form the predominate functional GAG-binding site. Functionally, has antimicrobial activity and is able to permeabilize different ions through liposomal membranes. Its function is as follows. Has opioid antagonist activity. Shows preference for mu-receptor. Has opioid antagonist activity. Shows higher degrees of preference for kappa-receptors than for mu-receptors. In terms of biological role, the lactotransferrin transferrin-like domain 1 functions as a serine protease of the peptidase S60 family that cuts arginine rich regions. This function contributes to the antimicrobial activity. Shows a preferential cleavage at -Arg-Ser-Arg-Arg-|- and -Arg-Arg-Ser-Arg-|-, and of Z-Phe-Arg-|-aminomethylcoumarin sites. Functionally, transcription factor with antiproliferative properties and ability to induce cell cycle arrest. Binds to the DeltaLf response element found in the SKP1, BAX, DCPS, and SELENOH promoters. This Homo sapiens (Human) protein is Lactotransferrin.